The chain runs to 109 residues: Aquaporin-2 (109 aa).

The Cytoplasmic segment spans residues 1–6; sequence SIAFSR. A helical membrane pass occupies residues 7–27; it reads AVLAEFLATLLFVFFGLGSAL. The Extracellular portion of the chain corresponds to 28–35; it reads NWPQAMPS. A helical membrane pass occupies residues 36-54; that stretch reads VLQIAMAFGLAIGTLVQAL. Residues 55–59 lie on the Cytoplasmic side of the membrane; it reads GHVSG. The segment at residues 60-69 is an intramembrane region (discontinuously helical); the sequence is AHINPAVTVA. The short motif at 63 to 65 is the NPA 1 element; the sequence is NPA. The Cytoplasmic segment spans residues 70–80; it reads CLVGCHVSFLR. A helical membrane pass occupies residues 81–102; that stretch reads AAFYVAAQLLGAVAGAALLHEI. At 103-109 the chain is on the extracellular side; sequence TPPDIRR.

Belongs to the MIP/aquaporin (TC 1.A.8) family. In terms of assembly, homotetramer. Post-translationally, serine phosphorylation is necessary and sufficient for expression at the apical membrane. Endocytosis is not phosphorylation-dependent. N-glycosylated.

Its subcellular location is the apical cell membrane. The protein localises to the basolateral cell membrane. The protein resides in the cell membrane. It is found in the cytoplasmic vesicle membrane. It localises to the golgi apparatus. Its subcellular location is the trans-Golgi network membrane. It catalyses the reaction H2O(in) = H2O(out). The enzyme catalyses glycerol(in) = glycerol(out). Forms a water-specific channel that provides the plasma membranes of renal collecting duct with high permeability to water, thereby permitting water to move in the direction of an osmotic gradient. Plays an essential role in renal water homeostasis. Could also be permeable to glycerol. This is Aquaporin-2 from Equus caballus (Horse).